We begin with the raw amino-acid sequence, 218 residues long: ATP phosphoribosyltransferase (218 aa).

The protein belongs to the ATP phosphoribosyltransferase family. Short subfamily. Heteromultimer composed of HisG and HisZ subunits.

Its subcellular location is the cytoplasm. The enzyme catalyses 1-(5-phospho-beta-D-ribosyl)-ATP + diphosphate = 5-phospho-alpha-D-ribose 1-diphosphate + ATP. It participates in amino-acid biosynthesis; L-histidine biosynthesis; L-histidine from 5-phospho-alpha-D-ribose 1-diphosphate: step 1/9. In terms of biological role, catalyzes the condensation of ATP and 5-phosphoribose 1-diphosphate to form N'-(5'-phosphoribosyl)-ATP (PR-ATP). Has a crucial role in the pathway because the rate of histidine biosynthesis seems to be controlled primarily by regulation of HisG enzymatic activity. In Synechococcus elongatus (strain ATCC 33912 / PCC 7942 / FACHB-805) (Anacystis nidulans R2), this protein is ATP phosphoribosyltransferase.